A 941-amino-acid chain; its full sequence is 26S proteasome regulatory subunit RPN2 (941 aa).

PC repeat units follow at residues 363 to 396, 400 to 437, 442 to 476, 477 to 511, 513 to 546, 547 to 582, 583 to 615, 617 to 651, 652 to 689, and 695 to 731; these read SATA…SSRF, GSLY…EDVD, GASL…TSGE, AAAF…GNIT, GLSM…LIRY, GGAF…DVRR, AAVT…AHDR, GAAF…FVRQ, AAMI…KHQE, and GACV…VGLA. The tract at residues 808-854 is disordered; sequence KARAKKTKKEKDTNEDDKKKKEKDLKKEETKKDDAKKESEAEEDFNK. The span at 816–854 shows a compositional bias: basic and acidic residues; it reads KEKDTNEDDKKKKEKDLKKEETKKDDAKKESEAEEDFNK.

It belongs to the proteasome subunit S1 family.

Acts as a regulatory subunit of the 26S proteasome which is involved in the ATP-dependent degradation of ubiquitinated proteins. The sequence is that of 26S proteasome regulatory subunit RPN2 (RPN2) from Candida glabrata (strain ATCC 2001 / BCRC 20586 / JCM 3761 / NBRC 0622 / NRRL Y-65 / CBS 138) (Yeast).